A 582-amino-acid chain; its full sequence is Pescadillo homolog (582 aa).

Positions 277 to 329 form a coiled coil; the sequence is LSALSASLARVVATVEEEENQLDNFPTEEEDQENMQAREKEQKEQEAQKRLFE. Over residues 294 to 309 the composition is skewed to acidic residues; the sequence is EENQLDNFPTEEEDQE. The tract at residues 294–317 is disordered; the sequence is EENQLDNFPTEEEDQENMQAREKE. Residues 323–416 enclose the BRCT domain; the sequence is AQKRLFEGLK…MRLPVEDYFL (94 aa). Positions 445–454 are enriched in basic and acidic residues; it reads ALQRGEKPVQ. Disordered regions lie at residues 445–511 and 554–582; these read ALQR…ETGS and REVN…AKKQ. A compositionally biased stretch (acidic residues) spans 455-477; it reads EEDEEEEDEDEEEDDDVDDEEFT. The span at 478-490 shows a compositional bias: basic and acidic residues; it reads EEKNLKKMEDTRA. Residues 517–582 are a coiled coil; sequence RLEQEEKAEE…QKKQKKAKKQ (66 aa). Residues 572 to 582 are compositionally biased toward basic residues; the sequence is AQKKQKKAKKQ.

Belongs to the pescadillo family. As to quaternary structure, component of the PeBoW complex, composed of bop1, pes1 and wdr12. The complex is held together by bop1, which interacts with pes1 via its N-terminal domain and with wdr12 via a high-affinity interaction between the seven-bladed beta-propeller domains of the 2 proteins. The PeBoW complex associates with the 66S pre-ribosome.

The protein localises to the nucleus. Its subcellular location is the nucleolus. It is found in the nucleoplasm. Component of the PeBoW complex, which is required for maturation of 28S and 5.8S ribosomal RNAs and formation of the 60S ribosome. The sequence is that of Pescadillo homolog (pes1) from Salmo salar (Atlantic salmon).